A 139-amino-acid polypeptide reads, in one-letter code: D-ribose pyranase (139 aa).

The Proton donor role is filled by H20. Substrate contacts are provided by residues D28, H106, and 128–130 (YAN).

Belongs to the RbsD / FucU family. RbsD subfamily. In terms of assembly, homodecamer.

It is found in the cytoplasm. It carries out the reaction beta-D-ribopyranose = beta-D-ribofuranose. It participates in carbohydrate metabolism; D-ribose degradation; D-ribose 5-phosphate from beta-D-ribopyranose: step 1/2. In terms of biological role, catalyzes the interconversion of beta-pyran and beta-furan forms of D-ribose. This chain is D-ribose pyranase, found in Shewanella pealeana (strain ATCC 700345 / ANG-SQ1).